The sequence spans 141 residues: MAKKIVGYIKLQIPAGGANPAPPVGPALGQKGVNIMEFCKQFNAKTQPQAGMIIPVVITVFSDKSFTFVTKTPPASILLIKEAKLQKGSSEPNRNKVGKVTKEQVRKIAELKMPDLNANTVEAAERMVEGTARSMGITIEG.

The protein belongs to the universal ribosomal protein uL11 family. As to quaternary structure, part of the ribosomal stalk of the 50S ribosomal subunit. Interacts with L10 and the large rRNA to form the base of the stalk. L10 forms an elongated spine to which L12 dimers bind in a sequential fashion forming a multimeric L10(L12)X complex. Post-translationally, one or more lysine residues are methylated.

In terms of biological role, forms part of the ribosomal stalk which helps the ribosome interact with GTP-bound translation factors. The polypeptide is Large ribosomal subunit protein uL11 (Chloroherpeton thalassium (strain ATCC 35110 / GB-78)).